The sequence spans 420 residues: Serine--tRNA ligase (420 aa).

229-231 (TAE) lines the L-serine pocket. 260-262 (RAE) contributes to the ATP binding site. Glutamate 283 is an L-serine binding site. 347–350 (EISS) contacts ATP. Serine 382 contacts L-serine.

The protein belongs to the class-II aminoacyl-tRNA synthetase family. Type-1 seryl-tRNA synthetase subfamily. As to quaternary structure, homodimer. The tRNA molecule binds across the dimer.

The protein resides in the cytoplasm. The enzyme catalyses tRNA(Ser) + L-serine + ATP = L-seryl-tRNA(Ser) + AMP + diphosphate + H(+). It carries out the reaction tRNA(Sec) + L-serine + ATP = L-seryl-tRNA(Sec) + AMP + diphosphate + H(+). It participates in aminoacyl-tRNA biosynthesis; selenocysteinyl-tRNA(Sec) biosynthesis; L-seryl-tRNA(Sec) from L-serine and tRNA(Sec): step 1/1. Its function is as follows. Catalyzes the attachment of serine to tRNA(Ser). Is also able to aminoacylate tRNA(Sec) with serine, to form the misacylated tRNA L-seryl-tRNA(Sec), which will be further converted into selenocysteinyl-tRNA(Sec). This chain is Serine--tRNA ligase, found in Caldicellulosiruptor saccharolyticus (strain ATCC 43494 / DSM 8903 / Tp8T 6331).